A 180-amino-acid chain; its full sequence is Large ribosomal subunit protein uL6 (180 aa).

Belongs to the universal ribosomal protein uL6 family. In terms of assembly, part of the 50S ribosomal subunit.

Its function is as follows. This protein binds to the 23S rRNA, and is important in its secondary structure. It is located near the subunit interface in the base of the L7/L12 stalk, and near the tRNA binding site of the peptidyltransferase center. This Christiangramia forsetii (strain DSM 17595 / CGMCC 1.15422 / KT0803) (Gramella forsetii) protein is Large ribosomal subunit protein uL6.